A 248-amino-acid chain; its full sequence is Large ribosomal subunit protein uL1 (248 aa).

The protein belongs to the universal ribosomal protein uL1 family. In terms of assembly, part of the 50S ribosomal subunit.

Binds directly to 23S rRNA. The L1 stalk is quite mobile in the ribosome, and is involved in E site tRNA release. Functionally, protein L1 is also a translational repressor protein, it controls the translation of the L11 operon by binding to its mRNA. In Orientia tsutsugamushi (strain Boryong) (Rickettsia tsutsugamushi), this protein is Large ribosomal subunit protein uL1.